A 71-amino-acid chain; its full sequence is Defensin-like protein 292 (71 aa).

3 disulfide bridges follow: Cys-44–Cys-64, Cys-50–Cys-69, and Cys-56–Cys-71.

The protein belongs to the DEFL family.

In Arabidopsis thaliana (Mouse-ear cress), this protein is Defensin-like protein 292.